A 202-amino-acid chain; its full sequence is LexA repressor (202 aa).

The H-T-H motif DNA-binding region spans 28-48 (QQEIARAFGFRSLGTVRNYLV). Active-site for autocatalytic cleavage activity residues include Ser120 and Lys157.

Belongs to the peptidase S24 family. Homodimer.

It catalyses the reaction Hydrolysis of Ala-|-Gly bond in repressor LexA.. Its function is as follows. Represses a number of genes involved in the response to DNA damage (SOS response), including recA and lexA. In the presence of single-stranded DNA, RecA interacts with LexA causing an autocatalytic cleavage which disrupts the DNA-binding part of LexA, leading to derepression of the SOS regulon and eventually DNA repair. This is LexA repressor from Syntrophotalea carbinolica (strain DSM 2380 / NBRC 103641 / GraBd1) (Pelobacter carbinolicus).